A 367-amino-acid polypeptide reads, in one-letter code: FAD synthetase 2, chloroplastic (367 aa).

The transit peptide at 1–57 (MLCGGSRVLQHLSDHNHHNSIGLGLGFCGAKIVQLSSFFLRPSQAMAKSHHFSRKLR) directs the protein to the chloroplast.

Requires Mg(2+) as cofactor.

Its subcellular location is the plastid. The protein localises to the chloroplast. The enzyme catalyses FMN + ATP + H(+) = FAD + diphosphate. The protein operates within cofactor biosynthesis; FAD biosynthesis; FAD from FMN: step 1/1. Catalyzes the adenylation of flavin mononucleotide (FMN) to form flavin adenine dinucleotide (FAD) coenzyme. The protein is FAD synthetase 2, chloroplastic of Arabidopsis thaliana (Mouse-ear cress).